Consider the following 142-residue polypeptide: Large ribosomal subunit protein uL11 (142 aa).

The protein belongs to the universal ribosomal protein uL11 family. As to quaternary structure, part of the ribosomal stalk of the 50S ribosomal subunit. Interacts with L10 and the large rRNA to form the base of the stalk. L10 forms an elongated spine to which L12 dimers bind in a sequential fashion forming a multimeric L10(L12)X complex. One or more lysine residues are methylated.

Its function is as follows. Forms part of the ribosomal stalk which helps the ribosome interact with GTP-bound translation factors. In Actinobacillus succinogenes (strain ATCC 55618 / DSM 22257 / CCUG 43843 / 130Z), this protein is Large ribosomal subunit protein uL11.